The chain runs to 93 residues: UPF0358 protein YlaN (93 aa).

Belongs to the UPF0358 family.

In terms of biological role, essential for cell growth and for normal cell shape. The polypeptide is UPF0358 protein YlaN (ylaN) (Bacillus subtilis (strain 168)).